Consider the following 447-residue polypeptide: 3-phosphoshikimate 1-carboxyvinyltransferase (447 aa).

Positions 36, 37, and 41 each coordinate 3-phosphoshikimate. Lysine 36 serves as a coordination point for phosphoenolpyruvate. Phosphoenolpyruvate-binding residues include glycine 109 and arginine 138. 3-phosphoshikimate contacts are provided by serine 183, glutamine 185, aspartate 333, and lysine 360. Glutamine 185 is a phosphoenolpyruvate binding site. Aspartate 333 serves as the catalytic Proton acceptor. Phosphoenolpyruvate-binding residues include arginine 364 and arginine 406.

The protein belongs to the EPSP synthase family. As to quaternary structure, monomer.

It is found in the cytoplasm. It catalyses the reaction 3-phosphoshikimate + phosphoenolpyruvate = 5-O-(1-carboxyvinyl)-3-phosphoshikimate + phosphate. It functions in the pathway metabolic intermediate biosynthesis; chorismate biosynthesis; chorismate from D-erythrose 4-phosphate and phosphoenolpyruvate: step 6/7. In terms of biological role, catalyzes the transfer of the enolpyruvyl moiety of phosphoenolpyruvate (PEP) to the 5-hydroxyl of shikimate-3-phosphate (S3P) to produce enolpyruvyl shikimate-3-phosphate and inorganic phosphate. This chain is 3-phosphoshikimate 1-carboxyvinyltransferase, found in Synechocystis sp. (strain ATCC 27184 / PCC 6803 / Kazusa).